An 868-amino-acid polypeptide reads, in one-letter code: Alanine--tRNA ligase (868 aa).

Positions 555, 559, 657, and 661 each coordinate Zn(2+). Residues 828–847 (SQVGGKGGGRPDMAQAGGSE) form a disordered region.

The protein belongs to the class-II aminoacyl-tRNA synthetase family. Requires Zn(2+) as cofactor.

The protein resides in the cytoplasm. It carries out the reaction tRNA(Ala) + L-alanine + ATP = L-alanyl-tRNA(Ala) + AMP + diphosphate. Functionally, catalyzes the attachment of alanine to tRNA(Ala) in a two-step reaction: alanine is first activated by ATP to form Ala-AMP and then transferred to the acceptor end of tRNA(Ala). Also edits incorrectly charged Ser-tRNA(Ala) and Gly-tRNA(Ala) via its editing domain. In Pseudoalteromonas translucida (strain TAC 125), this protein is Alanine--tRNA ligase.